Consider the following 186-residue polypeptide: ADP-ribosylation factor-like protein 8B-A (186 aa).

Positions 1–19 (MLALINRLLDWFKSLFWKE) form an intramembrane region, note=Mediates targeting to membranes. GTP contacts are provided by residues 29–35 (QYSGKTT), 71–75 (DIGGQ), and 130–133 (NKRD).

This sequence belongs to the small GTPase superfamily. Arf family.

The protein localises to the late endosome membrane. It localises to the lysosome membrane. The protein resides in the cytoplasm. Its subcellular location is the cytoskeleton. It is found in the spindle. The protein localises to the early endosome membrane. Functionally, small GTPase which cycles between active GTP-bound and inactive GDP-bound states. In its active state, binds to a variety of effector proteins playing a key role in the regulation of lysosomal positioning which is important for nutrient sensing, natural killer cell-mediated cytotoxicity and antigen presentation. Along with its effectors, orchestrates lysosomal transport and fusion. The sequence is that of ADP-ribosylation factor-like protein 8B-A (arl8ba) from Danio rerio (Zebrafish).